Reading from the N-terminus, the 1250-residue chain is DNA-directed RNA polymerase subunit beta'' (1250 aa).

Zn(2+) contacts are provided by Cys224, Cys314, Cys321, and Cys324.

The protein belongs to the RNA polymerase beta' chain family. RpoC2 subfamily. As to quaternary structure, in plastids the minimal PEP RNA polymerase catalytic core is composed of four subunits: alpha, beta, beta', and beta''. When a (nuclear-encoded) sigma factor is associated with the core the holoenzyme is formed, which can initiate transcription. Requires Zn(2+) as cofactor.

The protein localises to the plastid. It is found in the chloroplast. It catalyses the reaction RNA(n) + a ribonucleoside 5'-triphosphate = RNA(n+1) + diphosphate. DNA-dependent RNA polymerase catalyzes the transcription of DNA into RNA using the four ribonucleoside triphosphates as substrates. The polypeptide is DNA-directed RNA polymerase subunit beta'' (Staurastrum punctulatum (Green alga)).